A 526-amino-acid polypeptide reads, in one-letter code: GMP synthase [glutamine-hydrolyzing] (526 aa).

Positions 10–208 (RILILDFGSQ…VVDLCGCEKL (199 aa)) constitute a Glutamine amidotransferase type-1 domain. The Nucleophile role is filled by C87. Residues H182 and E184 contribute to the active site. Residues 209–401 (WTTENIIDDS…LGLPSDMVYR (193 aa)) form the GMPS ATP-PPase domain. 236–242 (SGGVDSS) is a binding site for ATP.

In terms of assembly, homodimer.

The enzyme catalyses XMP + L-glutamine + ATP + H2O = GMP + L-glutamate + AMP + diphosphate + 2 H(+). It participates in purine metabolism; GMP biosynthesis; GMP from XMP (L-Gln route): step 1/1. Catalyzes the synthesis of GMP from XMP. The polypeptide is GMP synthase [glutamine-hydrolyzing] (Hydrogenovibrio crunogenus (strain DSM 25203 / XCL-2) (Thiomicrospira crunogena)).